The following is a 1299-amino-acid chain: Sophorolipid transporter (1299 aa).

At 1–64 (MVDDIQVEKR…FCTPLDVFLE (64 aa)) the chain is on the cytoplasmic side. Residues 65 to 85 (ILALFFAAVHGAALPMFTLVV) form a helical membrane-spanning segment. The ABC transmembrane type-1 1 domain occupies 65–356 (ILALFFAAVH…IAPNVRFLVK (292 aa)). Residues 86 to 114 (GAIFNTFRDFTSYDLKGNEFQHKVNHLSL) are Extracellular-facing. The helical transmembrane segment at 115 to 135 (YFVYIGIGMLGSAFLESFLLV) threads the bilayer. Over 136-187 (DRGEVLAGRYRKHYLSAVIRQNIAFYDKLGGGEVSTRIINDTNSIQEAISDK) the chain is Cytoplasmic. Residues 188–208 (LGNVVQGIASFIAATVISFAS) traverse the membrane as a helical segment. Over 209–214 (QWKLAC) the chain is Extracellular. A helical membrane pass occupies residues 215–235 (ILLSAVGFMVITMGTGATFMA). The Cytoplasmic segment spans residues 236–293 (KYQLRSDAIYSQSGATVAEEALSAVRTTVAFGAQPHLAVKYEKVLDRVVKESKRSSYS). The chain crosses the membrane as a helical span at residues 294–314 (LGVMLACIWASTFWVYALALW). The Extracellular portion of the chain corresponds to 315–326 (QGSREIVSGSAD). A helical membrane pass occupies residues 327-347 (VGKIIVVITAMLLGSFQLGNI). Topologically, residues 348–725 (APNVRFLVKG…WGLNRKEWGY (378 aa)) are cytoplasmic. One can recognise an ABC transporter 1 domain in the interval 393 to 638 (IELKNVKFRY…EGPYKALVDA (246 aa)). Position 428–435 (428–435 (GASGSGKS)) interacts with ATP. Polar residues predominate over residues 681–690 (SAGTQTTQPP). The tract at residues 681 to 703 (SAGTQTTQPPEYQENDIPGVRNP) is disordered. Residues 726–746 (ILIGSLASIILGYCYPAMAII) form a helical membrane-spanning segment. The 290-residue stretch at 727–1016 (LIGSLASIIL…IFSYAPNMNS (290 aa)) folds into the ABC transmembrane type-1 2 domain. The Extracellular portion of the chain corresponds to 747–769 (TGQTTGSMVLPPSEYGKMRHVVN). The chain crosses the membrane as a helical span at residues 770–790 (IMGWWYFFVGCISFMTAFITI). The Cytoplasmic portion of the chain corresponds to 791–848 (AALSLASDKLVKNIRLALFRQLMRMDIAFFDHKNNTPGALTSILAKEAKMIEGLSGAT). Residues 849-869 (LGQIQQSLVTLIGGIVTGIPF) traverse the membrane as a helical segment. Topologically, residues 870–874 (NWRIG) are extracellular. A helical membrane pass occupies residues 875 to 895 (LVATSVVPVMLVCGFVRVWVL). Residues 896–954 (TQLSDRAREVYERSGSMASEYTSAVRTVQSLTRELDVVVKYTKTVDSQIFSSRIAIARS) lie on the Cytoplasmic side of the membrane. Residues 955-975 (ALYYALSEGMTPWVVALVFWW) traverse the membrane as a helical segment. Residues 976–987 (GSTVMRRGEASV) lie on the Extracellular side of the membrane. The helical transmembrane segment at 988-1008 (AGYMTVFMAIITGSQAAGQIF) threads the bilayer. The Cytoplasmic segment spans residues 1009–1299 (SYAPNMNSAK…LVNLQGLGEI (291 aa)). Positions 1053 to 1293 (IEFRHVNFRY…NGWYAELVNL (241 aa)) constitute an ABC transporter 2 domain. 1088–1095 (GASGCGKS) is an ATP binding site.

It belongs to the ABC transporter superfamily. ABCB family. Multidrug resistance exporter (TC 3.A.1.201) subfamily.

The protein localises to the cell membrane. Its function is as follows. Transports acidic acylated and non-acylated sophorolipids (SLs) into the extracellular space, where they can be lactonized by lactone esterase. The chain is Sophorolipid transporter (mdr) from Starmerella bombicola (Yeast).